A 249-amino-acid chain; its full sequence is MEELILGVVQGLTEFLPISSSGHLAIFTAIFNATPDVGYFAFLHLATFLAVLIFVKSEVFEIVNGISKKDKEYINLASKLVLSTIPAVIVGLCFGDFIESVFSSTFLIGVFLSITGILMLLSDKLNKNLKTIKSIPYLDALIVGIFQAFSVLPGISRSGTTLFAALFLGMKKEDAVKYSFLMSLPVTFGAGILELQKVAFSTEQIFGFFISFLTGLLGLYLVKKMVIGGKLKIFGYYCVLASFFVLMFL.

The next 8 helical transmembrane spans lie at 11-31 (GLTE…TAIF), 35-55 (PDVG…LIFV), 80-100 (LVLS…FIES), 101-121 (VFSS…LMLL), 135-155 (IPYL…LPGI), 180-200 (FLMS…KVAF), 202-222 (TEQI…LYLV), and 226-246 (VIGG…FFVL).

Belongs to the UppP family.

The protein resides in the cell membrane. It carries out the reaction di-trans,octa-cis-undecaprenyl diphosphate + H2O = di-trans,octa-cis-undecaprenyl phosphate + phosphate + H(+). Catalyzes the dephosphorylation of undecaprenyl diphosphate (UPP). The protein is Undecaprenyl-diphosphatase of Methanococcus maripaludis (strain C6 / ATCC BAA-1332).